A 394-amino-acid chain; its full sequence is Lipoyl synthase, chloroplastic (394 aa).

A chloroplast-targeting transit peptide spans 1–36; that stretch reads MMHHCSITKPTFSISISTQKLHHHSSKFLNLGFRIR. [4Fe-4S] cluster contacts are provided by Cys-127, Cys-132, Cys-138, Cys-158, Cys-162, Cys-165, and Ser-373. One can recognise a Radical SAM core domain in the interval 141-362; the sequence is GGGDGVATAT…KTYGESIGFR (222 aa).

This sequence belongs to the radical SAM superfamily. Lipoyl synthase family. Requires [4Fe-4S] cluster as cofactor. In terms of tissue distribution, expressed in roots, leaves and flowers.

The protein resides in the plastid. It is found in the chloroplast. It catalyses the reaction [[Fe-S] cluster scaffold protein carrying a second [4Fe-4S](2+) cluster] + N(6)-octanoyl-L-lysyl-[protein] + 2 oxidized [2Fe-2S]-[ferredoxin] + 2 S-adenosyl-L-methionine + 4 H(+) = [[Fe-S] cluster scaffold protein] + N(6)-[(R)-dihydrolipoyl]-L-lysyl-[protein] + 4 Fe(3+) + 2 hydrogen sulfide + 2 5'-deoxyadenosine + 2 L-methionine + 2 reduced [2Fe-2S]-[ferredoxin]. It participates in protein modification; protein lipoylation via endogenous pathway; protein N(6)-(lipoyl)lysine from octanoyl-[acyl-carrier-protein]: step 2/2. Its function is as follows. Catalyzes the radical-mediated insertion of two sulfur atoms into the C-6 and C-8 positions of the octanoyl moiety bound to the lipoyl domains of lipoate-dependent enzymes, thereby converting the octanoylated domains into lipoylated derivatives. Together with LIP2P and LIP2P2 is essential for de novo plastidial protein lipoylation during seed development. This Arabidopsis thaliana (Mouse-ear cress) protein is Lipoyl synthase, chloroplastic.